Reading from the N-terminus, the 114-residue chain is MAEITSAKAMARTVRVSPRKTRLVLDLIRGKKVADAIAILKFTPNKAARVIEKTLNSAIANAENNFGLEKANLVVSETFANEGPTMKRFRPRAKGSASPINKRTTHVTVVVAEK.

The protein belongs to the universal ribosomal protein uL22 family. In terms of assembly, part of the 50S ribosomal subunit.

In terms of biological role, this protein binds specifically to 23S rRNA; its binding is stimulated by other ribosomal proteins, e.g. L4, L17, and L20. It is important during the early stages of 50S assembly. It makes multiple contacts with different domains of the 23S rRNA in the assembled 50S subunit and ribosome. The globular domain of the protein is located near the polypeptide exit tunnel on the outside of the subunit, while an extended beta-hairpin is found that lines the wall of the exit tunnel in the center of the 70S ribosome. In Streptococcus uberis (strain ATCC BAA-854 / 0140J), this protein is Large ribosomal subunit protein uL22.